The primary structure comprises 628 residues: Siderophore iron transporter 1 (628 aa).

The next 14 membrane-spanning stretches (helical) occupy residues 68-88 (IYRV…GLDG), 107-127 (LLST…IFFA), 132-152 (IFGR…GTII), 164-184 (VGGC…EVIA), 194-214 (LLAL…SGNV), 225-245 (GIGM…ICML), 285-305 (IIGM…FTLA), 317-337 (IIVP…LWEI), 354-374 (GIFF…MQGD), 394-414 (ITSL…FILI), 420-440 (KPFI…LVHY), 448-468 (SGII…TYVT), 488-508 (LYLA…GAVW), and 559-579 (KILC…AFML).

Belongs to the major facilitator superfamily.

The protein localises to the endosome membrane. Its function is as follows. Involved in the transport of siderophore ferrioxamine B and so has a role in iron homeostasis. The protein is Siderophore iron transporter 1 (SIT1) of Saccharomyces cerevisiae (strain ATCC 204508 / S288c) (Baker's yeast).